The following is an 875-amino-acid chain: Metal transporter CNNM2 (875 aa).

The Extracellular portion of the chain corresponds to 1 to 250 (MIGCGACEPE…TKMIVGEEKK (250 aa)). N-linked (GlcNAc...) asparagine glycosylation is present at asparagine 112. Residues 122–148 (EHERRRHTPGERGLGGPAPPEPDSGPQ) are disordered. Residues 251 to 271 (FLLPFWLQVIFISLLLCLSGM) form a helical membrane-spanning segment. One can recognise a CNNM transmembrane domain in the interval 251–431 (FLLPFWLQVI…DPYNDLVKEE (181 aa)). The Cytoplasmic segment spans residues 272-313 (FSGLNLGLMALDPMELRIVQNCGTEKEKNYAKRIEPVRRQGN). The segment at residues 314 to 334 (YLLCSLLLGNVLVNTTLTILL) is an intramembrane region (helical). Topologically, residues 335–338 (DDIA) are cytoplasmic. The helical transmembrane segment at 339–359 (GSGLVAVVVSTIGIVIFGEIV) threads the bilayer. The Extracellular portion of the chain corresponds to 360-368 (PQAICSRHG). Residues 369 to 389 (LAVGANTIFLTKFFMMMTFPA) traverse the membrane as a helical segment. Residues 390 to 875 (SYPVSKLLDC…NHSLHSEGAI (486 aa)) lie on the Cytoplasmic side of the membrane. 2 CBS domains span residues 450-511 (MTPL…CTPL) and 518-584 (YNHP…ILDE). The disordered stretch occupies residues 741–763 (AGSPGENKSPPRPCGLNHSDSLS). At serine 761 the chain carries Phosphoserine.

It belongs to the ACDP family.

It localises to the cell membrane. Functionally, divalent metal cation transporter. Mediates transport of divalent metal cations in an order of Mg(2+) &gt; Co(2+) &gt; Mn(2+) &gt; Sr(2+) &gt; Ba(2+) &gt; Cu(2+) &gt; Fe(2+). The chain is Metal transporter CNNM2 (Cnnm2) from Rattus norvegicus (Rat).